The sequence spans 341 residues: Glycerol-3-phosphate dehydrogenase [NAD(P)+] (341 aa).

4 residues coordinate NADPH: Ser14, Phe15, Arg35, and Lys108. Positions 108 and 136 each coordinate sn-glycerol 3-phosphate. Ala140 contacts NADPH. Sn-glycerol 3-phosphate contacts are provided by Lys191, Asp244, Ser254, Arg255, and Asn256. Lys191 acts as the Proton acceptor in catalysis. Arg255 serves as a coordination point for NADPH. 2 residues coordinate NADPH: Val279 and Glu281.

The protein belongs to the NAD-dependent glycerol-3-phosphate dehydrogenase family.

It localises to the cytoplasm. The enzyme catalyses sn-glycerol 3-phosphate + NAD(+) = dihydroxyacetone phosphate + NADH + H(+). It carries out the reaction sn-glycerol 3-phosphate + NADP(+) = dihydroxyacetone phosphate + NADPH + H(+). Its pathway is membrane lipid metabolism; glycerophospholipid metabolism. Its function is as follows. Catalyzes the reduction of the glycolytic intermediate dihydroxyacetone phosphate (DHAP) to sn-glycerol 3-phosphate (G3P), the key precursor for phospholipid synthesis. This Pseudomonas savastanoi pv. phaseolicola (strain 1448A / Race 6) (Pseudomonas syringae pv. phaseolicola (strain 1448A / Race 6)) protein is Glycerol-3-phosphate dehydrogenase [NAD(P)+].